The primary structure comprises 267 residues: Ribosomal RNA small subunit methyltransferase A (267 aa).

S-adenosyl-L-methionine-binding residues include Asn-16, Leu-18, Gly-43, Glu-64, Asp-89, and Asn-110.

Belongs to the class I-like SAM-binding methyltransferase superfamily. rRNA adenine N(6)-methyltransferase family. RsmA subfamily.

It is found in the cytoplasm. The enzyme catalyses adenosine(1518)/adenosine(1519) in 16S rRNA + 4 S-adenosyl-L-methionine = N(6)-dimethyladenosine(1518)/N(6)-dimethyladenosine(1519) in 16S rRNA + 4 S-adenosyl-L-homocysteine + 4 H(+). Specifically dimethylates two adjacent adenosines (A1518 and A1519) in the loop of a conserved hairpin near the 3'-end of 16S rRNA in the 30S particle. May play a critical role in biogenesis of 30S subunits. The sequence is that of Ribosomal RNA small subunit methyltransferase A from Pseudomonas putida (strain ATCC 47054 / DSM 6125 / CFBP 8728 / NCIMB 11950 / KT2440).